A 273-amino-acid polypeptide reads, in one-letter code: uncharacterized protein (273 aa).

This sequence belongs to the PhyH family.

This is an uncharacterized protein from Mycobacterium tuberculosis (strain ATCC 25618 / H37Rv).